A 765-amino-acid polypeptide reads, in one-letter code: Putative maltooligosyl trehalose synthase (765 aa).

It belongs to the glycosyl hydrolase 13 family. In terms of assembly, monomer.

It carries out the reaction 4-[(1-&gt;4)-alpha-D-glucosyl](n-1)-D-glucose = 1-[(1-&gt;4)-alpha-D-glucosyl](n-1)-alpha-D-glucose. Functionally, catalyzes the conversion of maltooligosaccharide into the non-reducing saccharide, maltooligosyl trehalose (alpha-maltooligosyl alpha-D-glucoside) by intramolecular transglycosylation. The protein is Putative maltooligosyl trehalose synthase (treY) of Mycobacterium tuberculosis (strain CDC 1551 / Oshkosh).